We begin with the raw amino-acid sequence, 405 residues long: Multidrug resistance protein MdtH (405 aa).

The next 12 membrane-spanning stretches (helical) occupy residues 13-33 (YFLL…FPLI), 34-54 (SIRF…ALGL), 78-95 (MIIA…LMGI), 99-116 (PWLL…GTLF), 139-159 (LLMM…SWLL), 165-185 (LVCL…AWLL), 213-233 (YVLT…MLPI), 243-263 (AAVK…LYPI), 277-297 (LMAG…IEDL), 299-319 (ALFM…PARE), 340-360 (LGLA…YDVG), and 365-385 (IPQL…LGLY).

This sequence belongs to the major facilitator superfamily. DHA1 family. MdtH (TC 2.A.1.2.21) subfamily.

It localises to the cell inner membrane. The protein is Multidrug resistance protein MdtH of Sodalis glossinidius (strain morsitans).